We begin with the raw amino-acid sequence, 204 residues long: uncharacterized protein (204 aa).

Functionally, possibly involved in pGI2 replication mechanism. This is an uncharacterized protein from Bacillus thuringiensis.